The chain runs to 581 residues: NADH-quinone oxidoreductase subunit C/D (581 aa).

Residues 1 to 172 (MSATDLVSEL…PLFNMTAALF (172 aa)) form an NADH dehydrogenase I subunit C region. Positions 196 to 581 (ELMILNYGPH…IDYVMSDVDR (386 aa)) are NADH dehydrogenase I subunit D.

It in the N-terminal section; belongs to the complex I 30 kDa subunit family. The protein in the C-terminal section; belongs to the complex I 49 kDa subunit family. In terms of assembly, NDH-1 is composed of 13 different subunits. Subunits NuoB, CD, E, F, and G constitute the peripheral sector of the complex.

The protein localises to the cell inner membrane. It carries out the reaction a quinone + NADH + 5 H(+)(in) = a quinol + NAD(+) + 4 H(+)(out). Functionally, NDH-1 shuttles electrons from NADH, via FMN and iron-sulfur (Fe-S) centers, to quinones in the respiratory chain. The immediate electron acceptor for the enzyme in this species is believed to be ubiquinone. Couples the redox reaction to proton translocation (for every two electrons transferred, four hydrogen ions are translocated across the cytoplasmic membrane), and thus conserves the redox energy in a proton gradient. The polypeptide is NADH-quinone oxidoreductase subunit C/D (Rhodopseudomonas palustris (strain HaA2)).